The primary structure comprises 701 residues: Polyribonucleotide nucleotidyltransferase (701 aa).

Positions 489 and 495 each coordinate Mg(2+). The KH domain occupies 556-615 (PRIHTMKIHPDKIREVIGSGGKVIRSITEETGCAIDIEDDGTIRIASSDQASAEQAVKII). One can recognise an S1 motif domain in the interval 625–693 (GQVYEGKVVR…RQGRVKLTMK (69 aa)).

Belongs to the polyribonucleotide nucleotidyltransferase family. Mg(2+) is required as a cofactor.

It is found in the cytoplasm. It catalyses the reaction RNA(n+1) + phosphate = RNA(n) + a ribonucleoside 5'-diphosphate. Functionally, involved in mRNA degradation. Catalyzes the phosphorolysis of single-stranded polyribonucleotides processively in the 3'- to 5'-direction. The polypeptide is Polyribonucleotide nucleotidyltransferase (Magnetococcus marinus (strain ATCC BAA-1437 / JCM 17883 / MC-1)).